Consider the following 382-residue polypeptide: Protein NASP homolog 1 (382 aa).

The disordered stretch occupies residues 1-39 (MDTENIADASDIRVKDASGDSDEKGNGTTTEEETVEQKE). The segment covering 10–25 (SDIRVKDASGDSDEKG) has biased composition (basic and acidic residues). A TPR 1 repeat occupies 42-75 (LAELLAAGRRALKVNDIDKASDSLSEATELSSEI). The segment covering 103 to 112 (QLLKGPGEKE) has biased composition (basic and acidic residues). Positions 103–151 (QLLKGPGEKESGDEEQAGNSDDKTDEENGETEKEDGEESGEEEDDDDDT) are disordered. A compositionally biased stretch (acidic residues) spans 125–150 (KTDEENGETEKEDGEESGEEEDDDDD). 2 TPR repeats span residues 191–224 (ADVL…QRNV) and 233–266 (AQTY…LIAR). Positions 264 to 304 (IARQTELKHELERGVDDKEKKSEFENELKELEEMMPGVEEM) form a coiled coil. Residues 337 to 382 (PQEAGDQKEANDISSLVRRPAKRAVDAPTDNQAVKKEKEEEGTTSI) are disordered. Basic and acidic residues predominate over residues 369 to 382 (AVKKEKEEEGTTSI).

Belongs to the NASP family. As to quaternary structure, may interact with zinc finger protein tra-4 and histone deacetylase hda-1.

It is found in the nucleus. Functionally, promotes normal hermaphrodite (XX) development, in concert with zinc finger protein tra-4 and histone deacetylase hda-1, perhaps as components of a complex. May act redundantly with nasp-2. Involved in innate immune response to B.thuringiensis strain DB27 and S.aureus bacteria. May play a role in the uptake or spreading of dsRNA. This Caenorhabditis elegans protein is Protein NASP homolog 1.